The primary structure comprises 317 residues: Methionyl-tRNA formyltransferase (317 aa).

Residue 112-115 (SLLP) coordinates (6S)-5,6,7,8-tetrahydrofolate.

The protein belongs to the Fmt family.

It carries out the reaction L-methionyl-tRNA(fMet) + (6R)-10-formyltetrahydrofolate = N-formyl-L-methionyl-tRNA(fMet) + (6S)-5,6,7,8-tetrahydrofolate + H(+). Its function is as follows. Attaches a formyl group to the free amino group of methionyl-tRNA(fMet). The formyl group appears to play a dual role in the initiator identity of N-formylmethionyl-tRNA by promoting its recognition by IF2 and preventing the misappropriation of this tRNA by the elongation apparatus. The polypeptide is Methionyl-tRNA formyltransferase (Mycoplasma capricolum subsp. capricolum (strain California kid / ATCC 27343 / NCTC 10154)).